Reading from the N-terminus, the 143-residue chain is Large ribosomal subunit protein uL15 (143 aa).

The disordered stretch occupies residues 1–52 (MKLNTLAPAAGSKSAPKRLGRGIGSGLGKTSGKGHKGQKARSGGYHKVGFEG). Over residues 21–31 (RGIGSGLGKTS) the composition is skewed to gly residues.

The protein belongs to the universal ribosomal protein uL15 family. Part of the 50S ribosomal subunit.

In terms of biological role, binds to the 23S rRNA. The protein is Large ribosomal subunit protein uL15 of Francisella tularensis subsp. mediasiatica (strain FSC147).